Reading from the N-terminus, the 547-residue chain is Mercuric reductase (547 aa).

One can recognise an HMA domain in the interval 5 to 70 (APTELAITGM…AVVASGYGVH (66 aa)). A metal cation is bound by residues cysteine 16 and cysteine 19. Alanine 96 and threonine 121 together coordinate FAD. Residues cysteine 122 and cysteine 127 are joined by a disulfide bond. The FAD site is built by lysine 131, alanine 197, aspartate 389, and valine 397. Hg(2+) contacts are provided by cysteine 544 and cysteine 545.

It belongs to the class-I pyridine nucleotide-disulfide oxidoreductase family. As to quaternary structure, homodimer. FAD is required as a cofactor.

The catalysed reaction is Hg + NADP(+) + H(+) = Hg(2+) + NADPH. Functionally, resistance to Hg(2+) in bacteria appears to be governed by a specialized system which includes mercuric reductase. MerA protein is responsible for volatilizing mercury as Hg(0). The protein is Mercuric reductase (merA) of Acidithiobacillus ferrooxidans (Thiobacillus ferrooxidans).